We begin with the raw amino-acid sequence, 72 residues long: UPF0270 protein YheU (72 aa).

Belongs to the UPF0270 family.

In Shigella dysenteriae serotype 1 (strain Sd197), this protein is UPF0270 protein YheU.